Here is a 154-residue protein sequence, read N- to C-terminus: Ribonuclease 8 (154 aa).

Residues 1 to 27 form the signal peptide; that stretch reads MAPARAGCCALLLLLLGLWVAEIPVSA. His-42 (proton acceptor) is an active-site residue. 3 disulfide bridges follow: Cys-64/Cys-118, Cys-82/Cys-133, and Cys-89/Cys-96. Substrate is bound by residues 65 to 69 and Lys-90; that span reads KDLNT. The Proton donor role is filled by His-149.

This sequence belongs to the pancreatic ribonuclease family.

The protein resides in the secreted. Its function is as follows. Has a low ribonuclease activity. The chain is Ribonuclease 8 (RNASE8) from Pongo pygmaeus (Bornean orangutan).